Reading from the N-terminus, the 377-residue chain is UDP-N-acetylenolpyruvoylglucosamine reductase (377 aa).

Positions Leu48–Asp215 constitute an FAD-binding PCMH-type domain. Residue Arg193 is part of the active site. Ser268 (proton donor) is an active-site residue. Residue Glu369 is part of the active site.

Belongs to the MurB family. The cofactor is FAD.

The protein resides in the cytoplasm. The catalysed reaction is UDP-N-acetyl-alpha-D-muramate + NADP(+) = UDP-N-acetyl-3-O-(1-carboxyvinyl)-alpha-D-glucosamine + NADPH + H(+). It participates in cell wall biogenesis; peptidoglycan biosynthesis. Its function is as follows. Cell wall formation. In Corynebacterium diphtheriae (strain ATCC 700971 / NCTC 13129 / Biotype gravis), this protein is UDP-N-acetylenolpyruvoylglucosamine reductase.